The chain runs to 148 residues: UPF0260 protein KPK_1978 (148 aa).

Belongs to the UPF0260 family.

In Klebsiella pneumoniae (strain 342), this protein is UPF0260 protein KPK_1978.